The primary structure comprises 411 residues: Kelch domain-containing protein 10 (411 aa).

Kelch repeat units follow at residues 72–133, 135–186, 187–239, 240–288, 296–342, and 345–388; these read NLYV…LHGH, LLVF…IIHG, FLYV…HDGQ, RIYV…RRCH, EVFI…AVTP, and CMYI…YFPH.

It belongs to the KLHDC10 family. As to quaternary structure, component of a CRL2 E3 ubiquitin-protein ligase complex, also named ECS (Elongin BC-CUL2/5-SOCS-box protein) complex, composed of CUL2, Elongin BC (ELOB and ELOC), RBX1 and substrate-specific adapter KLHDC10.

The protein operates within protein modification; protein ubiquitination. Functionally, substrate-recognition component of a Cul2-RING (CRL2) E3 ubiquitin-protein ligase complex of the DesCEND (destruction via C-end degrons) pathway, which recognizes a C-degron located at the extreme C terminus of target proteins, leading to their ubiquitination and degradation. The C-degron recognized by the DesCEND pathway is usually a motif of less than ten residues and can be present in full-length proteins, truncated proteins or proteolytically cleaved forms. The CRL2(KLHDC10) complex specifically recognizes proteins with a proline-glycine (Pro-Gly) or an alanine tail (CAT tail) at the C-terminus, leading to their ubiquitination and degradation. The CRL2(KLHDC10) complex is involved in the ribosome-associated quality control (RQC) pathway, which mediates the extraction of incompletely synthesized nascent chains from stalled ribosomes: CRL2(KLHDC10) acts downstream of NEMF and recognizes CAT tails associated with stalled nascent chains, leading to their ubiquitination and degradation. This chain is Kelch domain-containing protein 10, found in Xenopus tropicalis (Western clawed frog).